Consider the following 298-residue polypeptide: TLR adapter interacting with SLC15A4 on the lysosome (298 aa).

Residues 287 to 291 carry the pLxIS motif motif; that stretch reads SLHIS. Ser-291 is subject to Phosphoserine.

Interacts (via pLxIS motif) with IRF5; leading to IRF5 activation. Interacts with SLC15A4; leading to its recruitment to endolysosome. The phosphorylated pLxIS motif constitutes an IRF5-binding motif, leading to recruitment of the transcription factor IRF5 to induce type-I interferons and other cytokines.

It is found in the lysosome membrane. Its subcellular location is the endosome membrane. The protein localises to the nucleus. The protein resides in the cytoplasm. Innate immune adapter that mediates the recruitment and activation of IRF5 downstream of endolysosomal toll-like receptors TLR7, TLR8 and TLR9. Following recruitment to endolysosome by SLC15A4 downstream of TLR7, TLR8 and TLR9, specifically recruits IRF5 transcription factor via its pLxIS motif, leading to IRF5 activation and subsequent expression of type I interferons. Plays a role in the regulation of endolysosomal pH in immune cells such as B-cells, dendritic cells and monocytes. In Mus musculus (Mouse), this protein is TLR adapter interacting with SLC15A4 on the lysosome.